A 128-amino-acid polypeptide reads, in one-letter code: Small ribosomal subunit protein bS6 (128 aa).

This sequence belongs to the bacterial ribosomal protein bS6 family.

In terms of biological role, binds together with bS18 to 16S ribosomal RNA. The chain is Small ribosomal subunit protein bS6 from Nitratiruptor sp. (strain SB155-2).